The following is a 661-amino-acid chain: Arginine--tRNA ligase, cytoplasmic (661 aa).

Residues 1–72 (MEARVAEAAA…QEEQSKTVKS (72 aa)) are could be involved in the assembly of the multisynthetase complex. L-arginine-binding positions include 201-203 (SPN), His-212, Tyr-385, Asp-389, and Gln-413. Positions 202–213 (PNIAKEMHVGHL) match the 'HIGH' region motif. The interaction with tRNA stretch occupies residues 530-544 (NTAAYLLYAFTRIRA).

It belongs to the class-I aminoacyl-tRNA synthetase family. In terms of assembly, monomer; also part of a multisubunit complex that groups tRNA ligases for Arg, Asp, Glu, Gln, Ile, Leu, Lys, Met and Pro.

The protein localises to the cytoplasm. It localises to the cytosol. It carries out the reaction tRNA(Arg) + L-arginine + ATP = L-arginyl-tRNA(Arg) + AMP + diphosphate. Forms part of a macromolecular complex that catalyzes the attachment of specific amino acids to cognate tRNAs during protein synthesis. The chain is Arginine--tRNA ligase, cytoplasmic (RARS1) from Gallus gallus (Chicken).